The primary structure comprises 339 residues: Phenylalanine--tRNA ligase alpha subunit (339 aa).

Glu254 provides a ligand contact to Mg(2+).

The protein belongs to the class-II aminoacyl-tRNA synthetase family. Phe-tRNA synthetase alpha subunit type 1 subfamily. In terms of assembly, tetramer of two alpha and two beta subunits. The cofactor is Mg(2+).

The protein resides in the cytoplasm. It catalyses the reaction tRNA(Phe) + L-phenylalanine + ATP = L-phenylalanyl-tRNA(Phe) + AMP + diphosphate + H(+). In Clostridium kluyveri (strain ATCC 8527 / DSM 555 / NBRC 12016 / NCIMB 10680 / K1), this protein is Phenylalanine--tRNA ligase alpha subunit.